Consider the following 146-residue polypeptide: Large ribosomal subunit protein uL15 (146 aa).

Residues 1–18 show a composition bias toward basic and acidic residues; sequence MKLHELKAAEGTRKERNR. Residues 1-58 are disordered; it reads MKLHELKAAEGTRKERNRVGRGMSSGNGKTSGRGHKGQKARSGGGVRPGFEGGQMPLF. Residues 42–52 show a composition bias toward gly residues; it reads SGGGVRPGFEG.

It belongs to the universal ribosomal protein uL15 family. In terms of assembly, part of the 50S ribosomal subunit.

In terms of biological role, binds to the 23S rRNA. This chain is Large ribosomal subunit protein uL15, found in Oceanobacillus iheyensis (strain DSM 14371 / CIP 107618 / JCM 11309 / KCTC 3954 / HTE831).